The primary structure comprises 493 residues: Phospholipid transfer protein (493 aa).

An N-terminal signal peptide occupies residues 1 to 17 (MALFGALFLALLAGAHA). An N-linked (GlcNAc...) (complex) asparagine glycan is attached at N64. N-linked (GlcNAc...) asparagine glycosylation occurs at N94. N-linked (GlcNAc...) (complex) asparagine glycosylation is present at N117. N143 is a glycosylation site (N-linked (GlcNAc...) asparagine). Cysteines 146 and 185 form a disulfide. N245 carries an N-linked (GlcNAc...) (complex) asparagine glycan. N-linked (GlcNAc...) asparagine glycosylation occurs at N398.

It belongs to the BPI/LBP/Plunc superfamily. BPI/LBP family. In terms of processing, glycosylation is necessary for secretion and its phospholipid transfer activity. Widely expressed. Highest level of expression in the ovary, thymus and placenta, with moderate levels found in the pancreas, small intestine, testis, lung and prostrate. Low level expression in the kidney, liver and spleen, with very low levels found in the heart, colon, skeletal muscle, leukocytes and brain. Expressed in the cortical neurons.

It localises to the secreted. Its subcellular location is the nucleus. It catalyses the reaction a 1,2-diacyl-sn-glycero-3-phosphocholine(in) = a 1,2-diacyl-sn-glycero-3-phosphocholine(out). The enzyme catalyses a 1,2-diacyl-sn-glycero-3-phosphoethanolamine(in) = a 1,2-diacyl-sn-glycero-3-phosphoethanolamine(out). The catalysed reaction is a 1,2-diacyl-sn-glycerol(in) = a 1,2-diacyl-sn-glycerol(out). It carries out the reaction a 1,2-diacyl-sn-glycero-3-phosphate(in) = a 1,2-diacyl-sn-glycero-3-phosphate(out). It catalyses the reaction a sphingomyelin(in) = a sphingomyelin(out). The enzyme catalyses a 1,2-diacyl-sn-glycero-3-phospho-(1'-sn-glycerol)(in) = a 1,2-diacyl-sn-glycero-3-phospho-(1'-sn-glycerol)(out). The catalysed reaction is a 1,2-diacyl-sn-glycero-3-phospho-(1D-myo-inositol)(in) = a 1,2-diacyl-sn-glycero-3-phospho-(1D-myo-inositol)(out). It carries out the reaction 1-hexadecanoyl-2-(5Z,8Z,11Z,14Z-eicosatetraenoyl)-sn-glycero-3-phosphoethanolamine(in) = 1-hexadecanoyl-2-(5Z,8Z,11Z,14Z-eicosatetraenoyl)-sn-glycero-3-phosphoethanolamine(out). It catalyses the reaction N-(hexadecanoyl)-sphing-4-enine-1-phosphocholine(in) = N-(hexadecanoyl)-sphing-4-enine-1-phosphocholine(out). The enzyme catalyses 1,2-dihexadecanoyl-sn-glycero-3-phosphocholine(in) = 1,2-dihexadecanoyl-sn-glycero-3-phosphocholine(out). Functionally, mediates the transfer of phospholipids and free cholesterol from triglyceride-rich lipoproteins (low density lipoproteins or LDL and very low density lipoproteins or VLDL) into high-density lipoproteins (HDL) as well as the exchange of phospholipids between triglyceride-rich lipoproteins themselves. Facilitates the transfer of a spectrum of different lipid molecules, including diacylglycerol, phosphatidic acid, sphingomyelin, phosphatidylcholine, phosphatidylinositol, phosphatidylglycerol, cerebroside and phosphatidyl ethanolamine. Plays an important role in HDL remodeling which involves modulating the size and composition of HDL. Also plays a key role in the uptake of cholesterol from peripheral cells and tissues that is subsequently transported to the liver for degradation and excretion. Two distinct forms of PLTP exist in plasma: an active form that can transfer phosphatidylcholine from phospholipid vesicles to HDL, and an inactive form that lacks this capability. In Homo sapiens (Human), this protein is Phospholipid transfer protein (PLTP).